The primary structure comprises 185 residues: Large ribosomal subunit protein uL22 (185 aa).

It belongs to the universal ribosomal protein uL22 family. In terms of assembly, part of the 50S ribosomal subunit.

This protein binds specifically to 23S rRNA. It makes multiple contacts with different domains of the 23S rRNA in the assembled 50S subunit and ribosome. In terms of biological role, the globular domain of the protein is located near the polypeptide exit tunnel on the outside of the subunit, while an extended beta-hairpin is found that lines the wall of the exit tunnel in the center of the 70S ribosome. The sequence is that of Large ribosomal subunit protein uL22 from Caldivirga maquilingensis (strain ATCC 700844 / DSM 13496 / JCM 10307 / IC-167).